The primary structure comprises 601 residues: Glutathione-regulated potassium-efflux system protein KefB (601 aa).

13 consecutive transmembrane segments (helical) span residues 4–24, 29–49, 55–75, 87–107, 115–135, 152–172, 177–197, 207–227, 230–250, 268–288, 291–311, 326–346, and 356–376; these read SDLL…VPLA, IGAV…GLGF, EILH…GLEL, IFGV…GLLM, AAVV…LQLM, VLLF…LLAG, HVNW…LIGG, FIAS…LVLG, LFME…GVLL, GLLL…GVLY, LLWV…VLYL, FAGV…LPAS, and ALLL…MKGI. Positions 400 to 519 constitute an RCK N-terminal domain; the sequence is KPQVIIVGFG…AGVTQFSRET (120 aa).

Belongs to the monovalent cation:proton antiporter 2 (CPA2) transporter (TC 2.A.37) family. KefB subfamily. Interacts with the regulatory subunit KefG.

The protein localises to the cell inner membrane. Its function is as follows. Pore-forming subunit of a potassium efflux system that confers protection against electrophiles. Catalyzes K(+)/H(+) antiport. This Klebsiella pneumoniae subsp. pneumoniae (strain ATCC 700721 / MGH 78578) protein is Glutathione-regulated potassium-efflux system protein KefB.